The primary structure comprises 645 residues: Zinc finger protein 235 (645 aa).

One can recognise a KRAB domain in the interval 8-86 (VTFRDVAVVF…TSHDVNKLAR (79 aa)). Disordered regions lie at residues 112 to 144 (GAEQ…EFLS) and 255 to 280 (KKSP…SVHP). Residues 129 to 144 (LPSNHSSSSDNQEFLS) show a composition bias toward polar residues. 13 consecutive C2H2-type zinc fingers follow at residues 285–307 (YWCH…QRVH), 313–335 (YRCD…RRVH), 341–363 (YKCE…ERIH), 369–391 (YKCG…QRVH), 397–419 (YECN…QRVH), 425–447 (YKCE…QRVH), 453–475 (FHCS…QRIH), 481–503 (YRCE…QSVH), 509–531 (YKCG…HSVH), 537–559 (FKCN…QRVH), 565–587 (YKCD…QRIH), 593–615 (FKCE…QRVH), and 621–643 (YTCQ…QRVH).

The protein belongs to the krueppel C2H2-type zinc-finger protein family.

The protein resides in the nucleus. Its function is as follows. May be involved in transcriptional regulation. This Mus musculus (Mouse) protein is Zinc finger protein 235 (Znf235).